We begin with the raw amino-acid sequence, 570 residues long: Dihydroxy-acid dehydratase (570 aa).

Position 61 (Cys61) interacts with [2Fe-2S] cluster. Asp94 serves as a coordination point for Mg(2+). Cys135 is a binding site for [2Fe-2S] cluster. Mg(2+) is bound by residues Asp136 and Lys137. Lys137 carries the post-translational modification N6-carboxylysine. Cys207 provides a ligand contact to [2Fe-2S] cluster. Glu459 lines the Mg(2+) pocket. Ser485 serves as the catalytic Proton acceptor.

It belongs to the IlvD/Edd family. Homodimer. The cofactor is [2Fe-2S] cluster. It depends on Mg(2+) as a cofactor.

It catalyses the reaction (2R)-2,3-dihydroxy-3-methylbutanoate = 3-methyl-2-oxobutanoate + H2O. It carries out the reaction (2R,3R)-2,3-dihydroxy-3-methylpentanoate = (S)-3-methyl-2-oxopentanoate + H2O. Its pathway is amino-acid biosynthesis; L-isoleucine biosynthesis; L-isoleucine from 2-oxobutanoate: step 3/4. It participates in amino-acid biosynthesis; L-valine biosynthesis; L-valine from pyruvate: step 3/4. In terms of biological role, functions in the biosynthesis of branched-chain amino acids. Catalyzes the dehydration of (2R,3R)-2,3-dihydroxy-3-methylpentanoate (2,3-dihydroxy-3-methylvalerate) into 2-oxo-3-methylpentanoate (2-oxo-3-methylvalerate) and of (2R)-2,3-dihydroxy-3-methylbutanoate (2,3-dihydroxyisovalerate) into 2-oxo-3-methylbutanoate (2-oxoisovalerate), the penultimate precursor to L-isoleucine and L-valine, respectively. This chain is Dihydroxy-acid dehydratase, found in Lactococcus lactis subsp. lactis (strain IL1403) (Streptococcus lactis).